Here is a 187-residue protein sequence, read N- to C-terminus: MKSGQAEIVETSKGIQKSGLMSRRIAILEFILRIVAFFNTIGSAILMGTTHETLPFFTQFIRFQAEYNDLPALTFFVVANAVVSGYLIMSLTLAFVHIVKRKTQNTRILLIVLDVAMLGLLSAGASSAAAIVYLAHNGNNKTNWFAICQQFNSFCERISGSLIGSFIAVVLLILLILLSAIALSRRH.

Over 1–24 the chain is Cytoplasmic; sequence MKSGQAEIVETSKGIQKSGLMSRR. The helical transmembrane segment at 25-45 threads the bilayer; it reads IAILEFILRIVAFFNTIGSAI. Residues 46-74 lie on the Extracellular side of the membrane; that stretch reads LMGTTHETLPFFTQFIRFQAEYNDLPALT. A helical transmembrane segment spans residues 75-95; sequence FFVVANAVVSGYLIMSLTLAF. At 96 to 107 the chain is on the cytoplasmic side; it reads VHIVKRKTQNTR. Residues 108 to 128 form a helical membrane-spanning segment; sequence ILLIVLDVAMLGLLSAGASSA. Residues 129-161 are Extracellular-facing; that stretch reads AAIVYLAHNGNNKTNWFAICQQFNSFCERISGS. An N-linked (GlcNAc...) asparagine glycan is attached at asparagine 140. A helical transmembrane segment spans residues 162–182; that stretch reads LIGSFIAVVLLILLILLSAIA. Topologically, residues 183–187 are cytoplasmic; it reads LSRRH.

Belongs to the Casparian strip membrane proteins (CASP) family. In terms of assembly, homodimer and heterodimers.

It is found in the cell membrane. Functionally, regulates membrane-cell wall junctions and localized cell wall deposition. Required for establishment of the Casparian strip membrane domain (CSD) and the subsequent formation of Casparian strips, a cell wall modification of the root endodermis that determines an apoplastic barrier between the intraorganismal apoplasm and the extraorganismal apoplasm and prevents lateral diffusion. This is Casparian strip membrane protein 5 from Arabidopsis lyrata subsp. lyrata (Lyre-leaved rock-cress).